Reading from the N-terminus, the 437-residue chain is Nuclear envelope integral membrane protein 1 (437 aa).

A signal peptide spans 1–44 (MAGGIKVSVWSAVGPGPRCWGAGGGGGATWLLLVVAGCVVCGSA). The N-linked (GlcNAc...) asparagine glycan is linked to N123. 5 helical membrane passes run 159-179 (PKLF…DLLS), 183-203 (IFYY…IVIF), 214-234 (PIYV…QLVF), 244-264 (YWHY…AVCY), and 288-308 (GLMY…VIAL). An a; required for its colocalization with lamins at the nuclear envelope region spans residues 184–295 (FYYSTGMSVG…GLGLMYSSIQ (112 aa)). The interval 334 to 403 (PVPPRLLTEE…LTPNEVSVHE (70 aa)) is b; required for interaction with RAN-GTP. Positions 334 to 437 (PVPPRLLTEE…PTFTQNNFLT (104 aa)) are required for nuclear localization. A phosphoserine mark is found at S366, S419, and S420. The segment covering 415–425 (DEELSSEEEGS) has biased composition (acidic residues). Residues 415 to 437 (DEELSSEEEGSEYPTFTQNNFLT) are disordered. Positions 428 to 437 (PTFTQNNFLT) are enriched in polar residues.

The protein belongs to the NEMP family. Homooligomer. Interacts with RAN-GTP. Interacts with EMD. Post-translationally, phosphorylated. Phosphorylation may regulate its interaction with RAN-GTP. As to expression, in the ovary, expression is strongest in primordial follicle oocytes and rapidly declines as oocytes mature and move from the cortex (at protein level).

Its subcellular location is the nucleus inner membrane. The protein resides in the nucleus envelope. In terms of biological role, together with EMD, contributes to nuclear envelope stiffness in germ cells. Required for female fertility. Essential for normal erythropoiesis. Required for efficient nuclear envelope opening and enucleation during the late stages of erythroblast maturation. The protein is Nuclear envelope integral membrane protein 1 (Nemp1) of Mus musculus (Mouse).